Reading from the N-terminus, the 72-residue chain is Metallothionein-like protein 1B (72 aa).

It belongs to the metallothionein superfamily. Type 15 family. Expressed in leaves of mature plants.

In terms of biological role, metallothioneins have a high content of cysteine residues that bind various heavy metals. Functions as a metal chelator of nickel (Ni), cadmium (Cd), zinc (Zn) and copper (Cu). Possesses higher affinity for Ni and Cd ions compared to Zn and Cu ions. The chain is Metallothionein-like protein 1B (MT1B) from Oryza sativa subsp. japonica (Rice).